The following is a 161-amino-acid chain: Large ribosomal subunit protein uL10 (161 aa).

This sequence belongs to the universal ribosomal protein uL10 family. Part of the ribosomal stalk of the 50S ribosomal subunit. The N-terminus interacts with L11 and the large rRNA to form the base of the stalk. The C-terminus forms an elongated spine to which L12 dimers bind in a sequential fashion forming a multimeric L10(L12)X complex.

Its function is as follows. Forms part of the ribosomal stalk, playing a central role in the interaction of the ribosome with GTP-bound translation factors. The polypeptide is Large ribosomal subunit protein uL10 (Sulfurovum sp. (strain NBC37-1)).